A 349-amino-acid chain; its full sequence is Dehydrogenase FPY6 (349 aa).

This sequence belongs to the Gfo/Idh/MocA family.

It participates in secondary metabolite biosynthesis. Functionally, dehydrogenase; part of the gene cluster that mediates the biosynthesis of the gamma-pyrones fusapyrone (FPY) and deoxyfusapyrone (dFPY). FPY is an undecaketide and thus likely synthesized by the polyketide synthase FPY1 from acetyl-CoA functioning as starter unit and the addition of 10 malonyl-CoA extender units by successive Claisen-condensations. Next to this, FPY shares some rare features: C-glycosylated 4-deoxyglucose at C-3, a gem-dimethyl group at C-13, and an alpha-beta to beta-gamma double bond shift at C-20. During FPY biosynthesis mono-C-methyl groups are transferred to the tetra-, penta-, hexa- and heptaketide, while two C-methyl groups are transferred to the nonaketide, suggesting that the CMet domain is programmed to selectively catalyze two successive C-alpha-methylation reactions of the nonaketide, while other alpha-carbons are non- or mono-methylated only. While the origin of the 4'-deoxyglucose moiety remains opaque, its transfer to C-3 is most likely mediated by the C-glycosyltransferase FPY2. Next to this, the hydroxyl group present at C-33 and discriminating between FPY and dFPY, is likely to be installed by the cytochrome P450 monooxygenase FPY7. No putative function can be predicted for the remaining genes FPY3-FPY6. This is Dehydrogenase FPY6 from Fusarium mangiferae (Mango malformation disease fungus).